The following is a 345-amino-acid chain: uncharacterized protein (345 aa).

2 consecutive PDZ GRASP-type domains span residues 27-112 and 118-207; these read CGFR…WASI and AIWH…HGVL. The GRASP stretch occupies residues 27-223; it reads CGFRVLKVEN…LSGPPPQPGD (197 aa). Residues 229–345 form a disordered region; it reads PMLGGPDHKV…APQNEELVKN (117 aa). Basic and acidic residues predominate over residues 297-308; sequence KLSRELDHKTKD. Polar residues-rich tracts occupy residues 309–318 and 328–338; these read ASSTNDSQTT and VNSTNDESAPQ.

It localises to the golgi apparatus membrane. This is an uncharacterized protein from Schizosaccharomyces pombe (strain 972 / ATCC 24843) (Fission yeast).